The primary structure comprises 185 residues: Elongation factor P (185 aa).

The protein belongs to the elongation factor P family.

Its subcellular location is the cytoplasm. The protein operates within protein biosynthesis; polypeptide chain elongation. Functionally, involved in peptide bond synthesis. Stimulates efficient translation and peptide-bond synthesis on native or reconstituted 70S ribosomes in vitro. Probably functions indirectly by altering the affinity of the ribosome for aminoacyl-tRNA, thus increasing their reactivity as acceptors for peptidyl transferase. The chain is Elongation factor P (efp) from Synechococcus elongatus (strain ATCC 33912 / PCC 7942 / FACHB-805) (Anacystis nidulans R2).